The primary structure comprises 199 residues: dTTP/UTP pyrophosphatase (199 aa).

The active-site Proton acceptor is the D75.

Belongs to the Maf family. YhdE subfamily. It depends on a divalent metal cation as a cofactor.

Its subcellular location is the cytoplasm. It catalyses the reaction dTTP + H2O = dTMP + diphosphate + H(+). The catalysed reaction is UTP + H2O = UMP + diphosphate + H(+). Functionally, nucleoside triphosphate pyrophosphatase that hydrolyzes dTTP and UTP. May have a dual role in cell division arrest and in preventing the incorporation of modified nucleotides into cellular nucleic acids. This is dTTP/UTP pyrophosphatase from Methylobacillus flagellatus (strain ATCC 51484 / DSM 6875 / VKM B-1610 / KT).